The chain runs to 275 residues: Large ribosomal subunit protein uL2cz (275 aa).

Disordered regions lie at residues 1–22 and 226–275; these read MAIH…DSQV and NPVD…RRRK.

This sequence belongs to the universal ribosomal protein uL2 family. As to quaternary structure, part of the 50S ribosomal subunit.

The protein resides in the plastid. It is found in the chloroplast. The sequence is that of Large ribosomal subunit protein uL2cz (rpl2-A) from Chloranthus spicatus (Chulantree).